We begin with the raw amino-acid sequence, 487 residues long: MPN domain-containing protein (487 aa).

The interval 1–55 is disordered; sequence MAAPESLSPGATAEEAPEEDEDDAEAEDPERGTGSGGRSGSLGGSGGGTAGPGMA. Ala2 is modified (N-acetylalanine). Position 8 is a phosphoserine (Ser8). Over residues 15 to 28 the composition is skewed to acidic residues; that stretch reads EAPEEDEDDAEAED. A compositionally biased stretch (gly residues) spans 33–55; it reads TGSGGRSGSLGGSGGGTAGPGMA. An RAMA domain is found at 61 to 156; that stretch reads TRRAVTLRVL…KYKAAWLRRH (96 aa). DNA is bound by residues Ser113, Ser115, and Trp135. The disordered stretch occupies residues 163–217; sequence ATADESPTSEGEEEELLLEEEEEDVLAGVSSEDKGHRPPGKGSLEPEATPPGKRM. Residues Ser168 and Ser171 each carry the phosphoserine modification. A compositionally biased stretch (acidic residues) spans 172-187; the sequence is EGEEEELLLEEEEEDV. Positions 258–393 constitute an MPN domain; the sequence is VAVSSNVLFL…PESKICPFWV (136 aa). Residues His335, His337, and Asp348 each coordinate Zn(2+). A JAMM motif motif is present at residues 335–348; it reads HSHPHSPAVPSLQD.

The protein belongs to the peptidase M67 family. As to quaternary structure, monomer. Mainly monomoric, but when binds to dsDNA, forms homotetramer assembled into two homodimers. May interact with histones; this interaction is facilitated by. In terms of processing, degraded following binding to N(6)-methyladenosine methylated DNA (m6A).

Probable protease. Acts as a sensor of N(6)-methyladenosine methylation on DNA (m6A): recognizes and binds m6A DNA, leading to its degradation. Binds only double strand DNA (dsDNA) in a sequence-independent manner. The polypeptide is MPN domain-containing protein (Mus musculus (Mouse)).